A 209-amino-acid polypeptide reads, in one-letter code: Thiamine-phosphate synthase (209 aa).

Residues glutamine 38–lysine 42 and asparagine 70 contribute to the 4-amino-2-methyl-5-(diphosphooxymethyl)pyrimidine site. Mg(2+)-binding residues include aspartate 71 and aspartate 90. Position 109 (serine 109) interacts with 4-amino-2-methyl-5-(diphosphooxymethyl)pyrimidine. Residue threonine 135–threonine 137 participates in 2-[(2R,5Z)-2-carboxy-4-methylthiazol-5(2H)-ylidene]ethyl phosphate binding. Lysine 138 lines the 4-amino-2-methyl-5-(diphosphooxymethyl)pyrimidine pocket. 2-[(2R,5Z)-2-carboxy-4-methylthiazol-5(2H)-ylidene]ethyl phosphate is bound by residues glycine 165 and valine 185–serine 186.

Belongs to the thiamine-phosphate synthase family. It depends on Mg(2+) as a cofactor.

The enzyme catalyses 2-[(2R,5Z)-2-carboxy-4-methylthiazol-5(2H)-ylidene]ethyl phosphate + 4-amino-2-methyl-5-(diphosphooxymethyl)pyrimidine + 2 H(+) = thiamine phosphate + CO2 + diphosphate. It carries out the reaction 2-(2-carboxy-4-methylthiazol-5-yl)ethyl phosphate + 4-amino-2-methyl-5-(diphosphooxymethyl)pyrimidine + 2 H(+) = thiamine phosphate + CO2 + diphosphate. It catalyses the reaction 4-methyl-5-(2-phosphooxyethyl)-thiazole + 4-amino-2-methyl-5-(diphosphooxymethyl)pyrimidine + H(+) = thiamine phosphate + diphosphate. It participates in cofactor biosynthesis; thiamine diphosphate biosynthesis; thiamine phosphate from 4-amino-2-methyl-5-diphosphomethylpyrimidine and 4-methyl-5-(2-phosphoethyl)-thiazole: step 1/1. Its function is as follows. Condenses 4-methyl-5-(beta-hydroxyethyl)thiazole monophosphate (THZ-P) and 2-methyl-4-amino-5-hydroxymethyl pyrimidine pyrophosphate (HMP-PP) to form thiamine monophosphate (TMP). This chain is Thiamine-phosphate synthase, found in Persephonella marina (strain DSM 14350 / EX-H1).